Consider the following 612-residue polypeptide: Chloride intracellular channel protein 6 (612 aa).

A disordered region spans residues 1 to 373 (MAEATEPKEV…NGPASEEGDL (373 aa)). Residues 34–51 (LEGREASEGAAEAPRDLG) show a composition bias toward basic and acidic residues. Ser40 is modified (phosphoserine). Residues 84–96 (PGTETPGTSGAPG) are compositionally biased toward low complexity. Polar residues predominate over residues 120 to 129 (QQVQGTSSGL). Residues 140-153 (EDARREPEDPKASE) are compositionally biased toward basic and acidic residues. Residues 208–223 (SSPQPQDEAIEIAAAE) show a composition bias toward low complexity. Basic and acidic residues-rich tracts occupy residues 240–264 (AKGE…RVDS) and 275–303 (EEAR…RPES). Phosphoserine is present on residues Ser264, Ser303, and Ser321. 2 stretches are compositionally biased toward basic and acidic residues: residues 325–335 (EEAKSTGHEES) and 354–364 (ELGRVNGRREN). Position 368 is a phosphoserine (Ser368). Residues 395–398 (CPFS) carry the G-site motif. Residues 397-417 (FSQRLFMILWLKGVIFNVTTV) traverse the membrane as a helical segment. The 172-residue stretch at 441-612 (DGEVKTDVNK…AYSDAAKRMK (172 aa)) folds into the GST C-terminal domain.

The protein belongs to the chloride channel CLIC family. In terms of assembly, monomer (soluble state). Interacts with dopamine receptors DRD2, DRD3 and DRD4. Phosphorylated. In terms of tissue distribution, predominantly expressed in brain, pituitary and stomach. In adult brain, it is restricted to the choroid plexus, the striatal proliferative subventricular zone and the cerebellum where it colocalizes with the D(3)R in the Purkinje cells of the lobules IX and X.

It localises to the cytoplasm. Its subcellular location is the cell membrane. It catalyses the reaction chloride(in) = chloride(out). With respect to regulation, channel activity is redox- and pH-regulated. Inhibited by IAA-94. Functionally, in the soluble state, catalyzes glutaredoxin-like thiol disulfide exchange reactions with reduced glutathione as electron donor. Can insert into membranes and form voltage-dependent chloride-selective channels. The channel opens upon membrane depolarization at positive voltages and closes at negative membrane voltages. May play a critical role in water-secreting cells, possibly through the regulation of chloride ion transport. This chain is Chloride intracellular channel protein 6 (Clic6), found in Rattus norvegicus (Rat).